The sequence spans 393 residues: Arginine biosynthesis bifunctional protein ArgJ (393 aa).

Substrate contacts are provided by threonine 142, lysine 168, threonine 179, glutamate 265, asparagine 388, and serine 393. The Nucleophile role is filled by threonine 179.

This sequence belongs to the ArgJ family. As to quaternary structure, heterotetramer of two alpha and two beta chains.

It localises to the cytoplasm. The enzyme catalyses N(2)-acetyl-L-ornithine + L-glutamate = N-acetyl-L-glutamate + L-ornithine. It carries out the reaction L-glutamate + acetyl-CoA = N-acetyl-L-glutamate + CoA + H(+). It functions in the pathway amino-acid biosynthesis; L-arginine biosynthesis; L-ornithine and N-acetyl-L-glutamate from L-glutamate and N(2)-acetyl-L-ornithine (cyclic): step 1/1. The protein operates within amino-acid biosynthesis; L-arginine biosynthesis; N(2)-acetyl-L-ornithine from L-glutamate: step 1/4. Its function is as follows. Catalyzes two activities which are involved in the cyclic version of arginine biosynthesis: the synthesis of N-acetylglutamate from glutamate and acetyl-CoA as the acetyl donor, and of ornithine by transacetylation between N(2)-acetylornithine and glutamate. The chain is Arginine biosynthesis bifunctional protein ArgJ from Desulfotalea psychrophila (strain LSv54 / DSM 12343).